The chain runs to 310 residues: tRNA-cytidine(32) 2-sulfurtransferase (310 aa).

Positions 48–53 (SGGKDS) match the PP-loop motif motif. [4Fe-4S] cluster contacts are provided by cysteine 123, cysteine 126, and cysteine 214.

It belongs to the TtcA family. As to quaternary structure, homodimer. It depends on Mg(2+) as a cofactor. The cofactor is [4Fe-4S] cluster.

Its subcellular location is the cytoplasm. It carries out the reaction cytidine(32) in tRNA + S-sulfanyl-L-cysteinyl-[cysteine desulfurase] + AH2 + ATP = 2-thiocytidine(32) in tRNA + L-cysteinyl-[cysteine desulfurase] + A + AMP + diphosphate + H(+). The protein operates within tRNA modification. Its function is as follows. Catalyzes the ATP-dependent 2-thiolation of cytidine in position 32 of tRNA, to form 2-thiocytidine (s(2)C32). The sulfur atoms are provided by the cysteine/cysteine desulfurase (IscS) system. In Vibrio cholerae serotype O1 (strain ATCC 39315 / El Tor Inaba N16961), this protein is tRNA-cytidine(32) 2-sulfurtransferase.